Consider the following 192-residue polypeptide: Flavin prenyltransferase UbiX (192 aa).

FMN-binding positions include 10-12 (GAS), Ser-36, 92-95 (SMTT), and Arg-127. 2 residues coordinate dimethylallyl phosphate: Tyr-157 and Lys-173.

It belongs to the UbiX/PAD1 family.

It catalyses the reaction dimethylallyl phosphate + FMNH2 = prenylated FMNH2 + phosphate. Its function is as follows. Flavin prenyltransferase that catalyzes the synthesis of the prenylated FMN cofactor (prenyl-FMN) for 4-hydroxy-3-polyprenylbenzoic acid decarboxylase UbiD. The prenyltransferase is metal-independent and links a dimethylallyl moiety from dimethylallyl monophosphate (DMAP) to the flavin N5 and C6 atoms of FMN. This is Flavin prenyltransferase UbiX from Chlamydia pneumoniae (Chlamydophila pneumoniae).